The primary structure comprises 643 residues: Phosphomethylpyrimidine synthase (643 aa).

Residues N248, M277, Y306, H342, 362–364, 403–406, and E442 contribute to the substrate site; these read SRG and DGLR. Zn(2+) is bound at residue H446. Residue Y469 coordinates substrate. H510 provides a ligand contact to Zn(2+). The [4Fe-4S] cluster site is built by C590, C593, and C598.

It belongs to the ThiC family. As to quaternary structure, homodimer. Requires [4Fe-4S] cluster as cofactor.

The enzyme catalyses 5-amino-1-(5-phospho-beta-D-ribosyl)imidazole + S-adenosyl-L-methionine = 4-amino-2-methyl-5-(phosphooxymethyl)pyrimidine + CO + 5'-deoxyadenosine + formate + L-methionine + 3 H(+). The protein operates within cofactor biosynthesis; thiamine diphosphate biosynthesis. Functionally, catalyzes the synthesis of the hydroxymethylpyrimidine phosphate (HMP-P) moiety of thiamine from aminoimidazole ribotide (AIR) in a radical S-adenosyl-L-methionine (SAM)-dependent reaction. The protein is Phosphomethylpyrimidine synthase of Paraburkholderia phytofirmans (strain DSM 17436 / LMG 22146 / PsJN) (Burkholderia phytofirmans).